Consider the following 153-residue polypeptide: Facilitator of iron transport 2 (153 aa).

A signal peptide spans 1 to 18; sequence MKFSTIFGATTVMTAVSA. The interval 73–98 is disordered; it reads TEGPDTTSEKSTTKTLTLTNGSGSST. Over residues 85-98 the composition is skewed to low complexity; the sequence is TKTLTLTNGSGSST. Asn-92 is a glycosylation site (N-linked (GlcNAc...) asparagine). The GPI-anchor amidated glycine moiety is linked to residue Gly-130. Positions 131 to 153 are cleaved as a propeptide — removed in mature form; the sequence is AAPAAFQGASVGALALGLISYLL.

The GPI-anchor is attached to the protein in the endoplasmic reticulum and serves to target the protein to the cell surface. There, the glucosamine-inositol phospholipid moiety is cleaved off and the GPI-modified mannoprotein is covalently attached via its lipidless GPI glycan remnant to the 1,6-beta-glucan of the outer cell wall layer.

It localises to the secreted. The protein localises to the cell wall. Its subcellular location is the membrane. In terms of biological role, involved in the uptake of non-siderophore and siderophore sources of iron. Has a role in the retention of iron in the cell wall and periplasmic space. The chain is Facilitator of iron transport 2 (FIT2) from Saccharomyces cerevisiae (strain ATCC 204508 / S288c) (Baker's yeast).